The primary structure comprises 319 residues: Shiga-like toxin 2 subunit A (319 aa).

An N-terminal signal peptide occupies residues 1-22 (MKCILFKWVLCLLLGFSSVSYS). Positions 23–272 (REFTIDFSTQ…CHHQGARSVR (250 aa)) are A1. Residue Glu189 is part of the active site. Residues Cys263 and Cys282 are joined by a disulfide bond. The interval 273 to 314 (AVNEESQPECQITGDRPVIKINNTLWESNTAAAFLNRKSQFL) is A2.

It belongs to the ribosome-inactivating protein family. In terms of assembly, shiga-like toxin contains a single A subunit and multiple copies of a B subunit.

The protein localises to the secreted. It catalyses the reaction Endohydrolysis of the N-glycosidic bond at one specific adenosine on the 28S rRNA.. The A subunit is responsible for inhibiting protein synthesis through the catalytic inactivation of 60S ribosomal subunits. After endocytosis, the A subunit is cleaved by furin in two fragments, A1 and A2: A1 is the catalytically active fragment, and A2 is essential for holotoxin assembly with the B subunits. The polypeptide is Shiga-like toxin 2 subunit A (stxA2) (Escherichia coli O157:H7 (Bacteriophage 933W)).